Consider the following 529-residue polypeptide: MEHLNQEQKAAVTCDNGVNVVYSGAGTGKTTVIAERFAYLVNEKGVNPQSILAFTFTDKAASEMRQRIIKLIPQKSLQDLHIYTFHSFANRFLQKHGKSDFAILSDSNRFFSDYEMGDQLQTVVEIYKNKVVDLELDNLEYNSAFRDACTDTFNEDFSTISNGQFRKRAATALRAYQNYLITNNLFDFSDLIIETCHLLKGNSELLQAFTESVHYILVDEFQDTNLAQYELVKLLATTHPNLFLVGDSNQMIYGWRGAVVEIFELLKNDFQAVKEFYTTQNYRSIQAVLAVANDVLTAIARKERKALVLLHSSIDSKAVPVHYKANSLKNQDQWIIYQMKQLHLNNGVPYDQMAVLFRKNKHLDAFSQTVLEDGDLPLAKLNLLTIHAAKGLEFEAVFVYGLVERAFPSLHWDGSDKHKLLEEMKLFYVAITRAKQFLFLVSVSVESFNAYYEPSRFLKLIEKEHLQTQKAAYFKEQLKTQPKPVNLYTETENAENLQKATDSKKWIILGAILLIIVIITAVLKLFVEN.

The UvrD-like helicase ATP-binding domain maps to 2–285; that stretch reads EHLNQEQKAA…FYTTQNYRSI (284 aa). An ATP-binding site is contributed by 23–30; it reads SGAGTGKT.

The protein belongs to the helicase family. UvrD subfamily.

It catalyses the reaction Couples ATP hydrolysis with the unwinding of duplex DNA by translocating in the 3'-5' direction.. It carries out the reaction ATP + H2O = ADP + phosphate + H(+). The polypeptide is Probable DNA helicase MPN_340 (Mycoplasma pneumoniae (strain ATCC 29342 / M129 / Subtype 1) (Mycoplasmoides pneumoniae)).